Reading from the N-terminus, the 644-residue chain is Biosynthetic arginine decarboxylase (644 aa).

Lys-113 bears the N6-(pyridoxal phosphate)lysine mark. 293-303 contacts substrate; that stretch reads FDVGGGLGVDY.

The protein belongs to the Orn/Lys/Arg decarboxylase class-II family. SpeA subfamily. The cofactor is Mg(2+). Requires pyridoxal 5'-phosphate as cofactor.

It carries out the reaction L-arginine + H(+) = agmatine + CO2. Functionally, catalyzes the biosynthesis of agmatine from arginine. This Pasteurella multocida (strain Pm70) protein is Biosynthetic arginine decarboxylase.